A 157-amino-acid polypeptide reads, in one-letter code: Root allergen protein (157 aa).

The protein belongs to the BetVI family.

The polypeptide is Root allergen protein (Taraxacum officinale (Common dandelion)).